The chain runs to 354 residues: Phosphate acyltransferase (354 aa).

This sequence belongs to the PlsX family. As to quaternary structure, homodimer. Probably interacts with PlsY.

The protein resides in the cytoplasm. The catalysed reaction is a fatty acyl-[ACP] + phosphate = an acyl phosphate + holo-[ACP]. It functions in the pathway lipid metabolism; phospholipid metabolism. In terms of biological role, catalyzes the reversible formation of acyl-phosphate (acyl-PO(4)) from acyl-[acyl-carrier-protein] (acyl-ACP). This enzyme utilizes acyl-ACP as fatty acyl donor, but not acyl-CoA. This Nitrobacter hamburgensis (strain DSM 10229 / NCIMB 13809 / X14) protein is Phosphate acyltransferase.